We begin with the raw amino-acid sequence, 258 residues long: Phosphate import ATP-binding protein PstB (258 aa).

The ABC transporter domain maps to 12 to 253 (IQVHNLNFYY…PKMKQTEDYI (242 aa)). 44-51 (GPSGCGKS) is a binding site for ATP.

This sequence belongs to the ABC transporter superfamily. Phosphate importer (TC 3.A.1.7) family. In terms of assembly, the complex is composed of two ATP-binding proteins (PstB), two transmembrane proteins (PstC and PstA) and a solute-binding protein (PstS).

It localises to the cell inner membrane. The enzyme catalyses phosphate(out) + ATP + H2O = ADP + 2 phosphate(in) + H(+). Part of the ABC transporter complex PstSACB involved in phosphate import. Responsible for energy coupling to the transport system. The protein is Phosphate import ATP-binding protein PstB of Photorhabdus laumondii subsp. laumondii (strain DSM 15139 / CIP 105565 / TT01) (Photorhabdus luminescens subsp. laumondii).